The sequence spans 696 residues: DNA-directed RNA polymerase subunit beta N-terminal section (696 aa).

This sequence belongs to the RNA polymerase beta chain family. In plastids the minimal PEP RNA polymerase catalytic core is composed of four subunits: alpha, beta, beta', and beta''. When a (nuclear-encoded) sigma factor is associated with the core the holoenzyme is formed, which can initiate transcription.

It is found in the plastid. The protein resides in the chloroplast. It carries out the reaction RNA(n) + a ribonucleoside 5'-triphosphate = RNA(n+1) + diphosphate. DNA-dependent RNA polymerase catalyzes the transcription of DNA into RNA using the four ribonucleoside triphosphates as substrates. This Stigeoclonium helveticum (Green alga) protein is DNA-directed RNA polymerase subunit beta N-terminal section (rpoB1).